A 202-amino-acid chain; its full sequence is LexA repressor (202 aa).

Positions 28-48 form a DNA-binding region, H-T-H motif; sequence RAEIAQQLGFRSPNAAEEHLK. Active-site for autocatalytic cleavage activity residues include serine 119 and lysine 156.

The protein belongs to the peptidase S24 family. Homodimer.

The catalysed reaction is Hydrolysis of Ala-|-Gly bond in repressor LexA.. Represses a number of genes involved in the response to DNA damage (SOS response), including recA and lexA. In the presence of single-stranded DNA, RecA interacts with LexA causing an autocatalytic cleavage which disrupts the DNA-binding part of LexA, leading to derepression of the SOS regulon and eventually DNA repair. The protein is LexA repressor of Pectobacterium atrosepticum (strain SCRI 1043 / ATCC BAA-672) (Erwinia carotovora subsp. atroseptica).